Consider the following 51-residue polypeptide: uncharacterized protein (51 aa).

The chain crosses the membrane as a helical span at residues 10-29; the sequence is LFLYHPLFLLLLYIYLVLFI.

Its subcellular location is the plastid. The protein localises to the chloroplast membrane. This is an uncharacterized protein from Anthoceros angustus (Hornwort).